Here is an 88-residue protein sequence, read N- to C-terminus: Putative regulatory protein Npun_R3866 (88 aa).

The protein belongs to the RemA family.

The polypeptide is Putative regulatory protein Npun_R3866 (Nostoc punctiforme (strain ATCC 29133 / PCC 73102)).